The following is a 132-amino-acid chain: uncharacterized protein (132 aa).

In terms of domain architecture, HTH merR-type spans 1–69 (MNIGEAAKKS…LDEVGKLLTL (69 aa)). The H-T-H motif DNA-binding region spans 4–23 (GEAAKKSGLTPKMIRYYESI).

It localises to the cytoplasm. This is an uncharacterized protein from Pseudomonas aeruginosa (strain ATCC 15692 / DSM 22644 / CIP 104116 / JCM 14847 / LMG 12228 / 1C / PRS 101 / PAO1).